Consider the following 388-residue polypeptide: Formate-dependent phosphoribosylglycinamide formyltransferase (388 aa).

Residues 20–21 (EL) and glutamate 80 contribute to the N(1)-(5-phospho-beta-D-ribosyl)glycinamide site. ATP is bound by residues arginine 112, lysine 153, 158 to 163 (SSGKGQ), 193 to 196 (EEFI), and glutamate 201. The ATP-grasp domain maps to 117-306 (RLAFEKLGLR…EFEIHARAIL (190 aa)). Mg(2+) contacts are provided by glutamate 265 and glutamate 277. N(1)-(5-phospho-beta-D-ribosyl)glycinamide contacts are provided by residues aspartate 284, lysine 352, and 359–360 (RR).

This sequence belongs to the PurK/PurT family. Homodimer.

It carries out the reaction N(1)-(5-phospho-beta-D-ribosyl)glycinamide + formate + ATP = N(2)-formyl-N(1)-(5-phospho-beta-D-ribosyl)glycinamide + ADP + phosphate + H(+). The protein operates within purine metabolism; IMP biosynthesis via de novo pathway; N(2)-formyl-N(1)-(5-phospho-D-ribosyl)glycinamide from N(1)-(5-phospho-D-ribosyl)glycinamide (formate route): step 1/1. Functionally, involved in the de novo purine biosynthesis. Catalyzes the transfer of formate to 5-phospho-ribosyl-glycinamide (GAR), producing 5-phospho-ribosyl-N-formylglycinamide (FGAR). Formate is provided by PurU via hydrolysis of 10-formyl-tetrahydrofolate. The chain is Formate-dependent phosphoribosylglycinamide formyltransferase from Methanococcus maripaludis (strain C7 / ATCC BAA-1331).